The chain runs to 199 residues: FMN-dependent NADH:quinone oxidoreductase 2 (199 aa).

Residues Ser10, 16-18 (SVS), and 96-99 (MYNF) each bind FMN.

It belongs to the azoreductase type 1 family. As to quaternary structure, homodimer. FMN serves as cofactor.

It carries out the reaction 2 a quinone + NADH + H(+) = 2 a 1,4-benzosemiquinone + NAD(+). It catalyses the reaction N,N-dimethyl-1,4-phenylenediamine + anthranilate + 2 NAD(+) = 2-(4-dimethylaminophenyl)diazenylbenzoate + 2 NADH + 2 H(+). Quinone reductase that provides resistance to thiol-specific stress caused by electrophilic quinones. Its function is as follows. Also exhibits azoreductase activity. Catalyzes the reductive cleavage of the azo bond in aromatic azo compounds to the corresponding amines. In Pseudomonas fluorescens (strain ATCC BAA-477 / NRRL B-23932 / Pf-5), this protein is FMN-dependent NADH:quinone oxidoreductase 2.